Consider the following 480-residue polypeptide: Putative auxin transporter-like protein 4 (480 aa).

Residues 1 to 66 (MASEKVETIV…DAWFSCASNQ (66 aa)) lie on the Cytoplasmic side of the membrane. A helical membrane pass occupies residues 67–84 (VAQVLLTLPYSFSQLGMA). Residues 85 to 86 (SG) lie on the Extracellular side of the membrane. The helical transmembrane segment at 87–107 (VAFQVFYGLMGSWTAYLISVL) threads the bilayer. At 108–143 (YVEYRTRRERDKVDFRNHVIQWFEVLDGLLGRHWRN) the chain is on the cytoplasmic side. A helical transmembrane segment spans residues 144 to 164 (AGLLFNCTFLLFGSVIQLIAC). The Extracellular segment spans residues 165–179 (ASNIYYINDRLDKRT). The helical transmembrane segment at 180-200 (WTYIFGACCATTVFVPSFHNY) threads the bilayer. Residues 201–203 (RVW) are Cytoplasmic-facing. The chain crosses the membrane as a helical span at residues 204–224 (SFLGLLMTSYTAWYLTVAAVV). The Extracellular segment spans residues 225–241 (HGKVDGAAPRAGPSKTM). Residues 242-262 (VLYFTGATNILYTFGGHAVTV) traverse the membrane as a helical segment. Over 263–275 (EIMHAMWRPRRFK) the chain is Cytoplasmic. Residues 276 to 296 (MIYLAATAYVLTLTLPSAAAM) traverse the membrane as a helical segment. Topologically, residues 297-323 (YWAFGDALLDHSNAFALLPRTPWRDAA) are extracellular. The helical transmembrane segment at 324–344 (VVLMLIHQFITFGFACTPLYF) threads the bilayer. The Cytoplasmic segment spans residues 345–365 (VWEKAIGVHGGAGVLRRAAAR). A helical membrane pass occupies residues 366-386 (LPVVLPIWFLAVIFPFFGPIN). Position 387 (serine 387) is a topological domain, extracellular. A helical membrane pass occupies residues 388–408 (TVGSFLVSFTVYIIPAMAHMA). The Cytoplasmic portion of the chain corresponds to 409 to 433 (TFAPAAARENAVEPPPRALGGWPGT). A helical membrane pass occupies residues 434–454 (FAANCFVVAWVLVVGFGFGGW). At 455 to 480 (ASTVNFVRQVDTFGLFTKCYQCPPRH) the chain is on the extracellular side.

This sequence belongs to the amino acid/polyamine transporter 2 family. Amino acid/auxin permease (AAAP) (TC 2.A.18.1) subfamily.

It localises to the cell membrane. Functionally, carrier protein involved in proton-driven auxin influx. May mediate the formation of auxin gradient from developing leaves (site of auxin biosynthesis) to tips. The polypeptide is Putative auxin transporter-like protein 4 (Oryza sativa subsp. japonica (Rice)).